We begin with the raw amino-acid sequence, 298 residues long: Probable oxidoreductase (298 aa).

Residue 9–33 (VVTGGASGLGAETVRALAAAGAEVT) participates in NAD(+) binding. Residue serine 139 participates in substrate binding. The active-site Proton acceptor is the tyrosine 165.

This sequence belongs to the short-chain dehydrogenases/reductases (SDR) family.

In Streptomyces antibioticus, this protein is Probable oxidoreductase.